Reading from the N-terminus, the 367-residue chain is Probable ATP-dependent RNA helicase MJ0669 (367 aa).

The short motif at M6–M34 is the Q motif element. Residues P38–I206 enclose the Helicase ATP-binding domain. A51–T58 serves as a coordination point for ATP. Residues D154–D157 carry the DEAD box motif. The Helicase C-terminal domain occupies N213–G367.

It belongs to the DEAD box helicase family. As to quaternary structure, homodimer.

It catalyses the reaction ATP + H2O = ADP + phosphate + H(+). The polypeptide is Probable ATP-dependent RNA helicase MJ0669 (Methanocaldococcus jannaschii (strain ATCC 43067 / DSM 2661 / JAL-1 / JCM 10045 / NBRC 100440) (Methanococcus jannaschii)).